A 91-amino-acid polypeptide reads, in one-letter code: MEKVRLTAWVRGHVQGVGFRWWTRARALELGLTGAATNLDDGRVEVVAEGDRTACERLLELLRSGQTPGRVDSVVERWTNHRGSFTGFEER.

In terms of domain architecture, Acylphosphatase-like spans 5–91 (RLTAWVRGHV…RGSFTGFEER (87 aa)). Catalysis depends on residues Arg-20 and Asn-38.

This sequence belongs to the acylphosphatase family.

It catalyses the reaction an acyl phosphate + H2O = a carboxylate + phosphate + H(+). The protein is Acylphosphatase (acyP) of Thermobifida fusca (strain YX).